We begin with the raw amino-acid sequence, 351 residues long: S-adenosylmethionine:tRNA ribosyltransferase-isomerase (351 aa).

It belongs to the QueA family. In terms of assembly, monomer.

The protein localises to the cytoplasm. It catalyses the reaction 7-aminomethyl-7-carbaguanosine(34) in tRNA + S-adenosyl-L-methionine = epoxyqueuosine(34) in tRNA + adenine + L-methionine + 2 H(+). It participates in tRNA modification; tRNA-queuosine biosynthesis. Transfers and isomerizes the ribose moiety from AdoMet to the 7-aminomethyl group of 7-deazaguanine (preQ1-tRNA) to give epoxyqueuosine (oQ-tRNA). This is S-adenosylmethionine:tRNA ribosyltransferase-isomerase from Hydrogenovibrio crunogenus (strain DSM 25203 / XCL-2) (Thiomicrospira crunogena).